A 235-amino-acid chain; its full sequence is Transcription factor hepR (235 aa).

Positions 14-45 are disordered; sequence QNSPESSRDVLSMASPGLLPIDPSPEHDETNK. The C2H2-type zinc-finger motif lies at 175 to 205; it reads IQCPCLDERGERCSRMFSRLDNMRDHVRRIH.

It is found in the nucleus. In terms of biological role, transcription factor; part of the gene cluster that mediates the biosynthesis of heptelidic acid (HA), a sesquiterpene lactone that acts as an inhibitor of glyceraldehyde-3-phosphatedehydrogenase (GAPDH) and a growth inhibitor of the salt-tolerant lactic acid bacteria in soy sauce brewing. Both hepR and hepS regulate the transcription of the heptelidic acid cluster, but they are not involved in mutual transcriptional regulation and act with different mechanisms. This Aspergillus oryzae (strain ATCC 42149 / RIB 40) (Yellow koji mold) protein is Transcription factor hepR.